Here is a 382-residue protein sequence, read N- to C-terminus: Pyrimidine monooxygenase RutA (382 aa).

FMN contacts are provided by residues 68–69, N134, E143, 159–160, and S209; these read IK and RY.

The protein belongs to the NtaA/SnaA/DszA monooxygenase family. RutA subfamily.

The enzyme catalyses uracil + FMNH2 + NADH + O2 = (Z)-3-ureidoacrylate + FMN + NAD(+) + H2O + H(+). The catalysed reaction is thymine + FMNH2 + NADH + O2 = (Z)-2-methylureidoacrylate + FMN + NAD(+) + H2O + H(+). Its function is as follows. Catalyzes the pyrimidine ring opening between N-3 and C-4 by an unusual flavin hydroperoxide-catalyzed mechanism, adding oxygen atoms in the process to yield ureidoacrylate peracid, that immediately reacts with FMN forming ureidoacrylate and FMN-N(5)-oxide. The FMN-N(5)-oxide reacts spontaneously with NADH to produce FMN. Requires the flavin reductase RutF to regenerate FMN in vivo. This chain is Pyrimidine monooxygenase RutA, found in Escherichia coli O81 (strain ED1a).